We begin with the raw amino-acid sequence, 80 residues long: RNA-binding protein Hfq (80 aa).

The region spanning 9-68 (EPFLNALRKERIPVSIYLVNGIKLQGQIDSFDQFVVLLKNTVSQMVYKHAISTIVPSRPV) is the Sm domain.

It belongs to the Hfq family. In terms of assembly, homohexamer.

In terms of biological role, RNA chaperone that binds small regulatory RNA (sRNAs) and mRNAs to facilitate mRNA translational regulation in response to envelope stress, environmental stress and changes in metabolite concentrations. Also binds with high specificity to tRNAs. This Thioalkalivibrio sulfidiphilus (strain HL-EbGR7) protein is RNA-binding protein Hfq.